The following is a 197-amino-acid chain: Segregation and condensation protein B (197 aa).

It belongs to the ScpB family. In terms of assembly, homodimer. Homodimerization may be required to stabilize the binding of ScpA to the Smc head domains. Component of a cohesin-like complex composed of ScpA, ScpB and the Smc homodimer, in which ScpA and ScpB bind to the head domain of Smc. The presence of the three proteins is required for the association of the complex with DNA.

It is found in the cytoplasm. Participates in chromosomal partition during cell division. May act via the formation of a condensin-like complex containing Smc and ScpA that pull DNA away from mid-cell into both cell halves. The sequence is that of Segregation and condensation protein B from Bacillus licheniformis (strain ATCC 14580 / DSM 13 / JCM 2505 / CCUG 7422 / NBRC 12200 / NCIMB 9375 / NCTC 10341 / NRRL NRS-1264 / Gibson 46).